The sequence spans 234 residues: Large ribosomal subunit protein uL1 (234 aa).

It belongs to the universal ribosomal protein uL1 family. In terms of assembly, part of the 50S ribosomal subunit.

Functionally, binds directly to 23S rRNA. The L1 stalk is quite mobile in the ribosome, and is involved in E site tRNA release. Its function is as follows. Protein L1 is also a translational repressor protein, it controls the translation of the L11 operon by binding to its mRNA. This is Large ribosomal subunit protein uL1 from Helicobacter pylori (strain G27).